Consider the following 634-residue polypeptide: Sodium-dependent neutral amino acid transporter B(0)AT1 (634 aa).

The Cytoplasmic portion of the chain corresponds to 1–41 (MVRLVLPNPGLEERIPSLDELEVIEKEEAGSRPKWDNKAQY). The residue at position 17 (Ser-17) is a Phosphoserine. A helical membrane pass occupies residues 42–62 (MLTCVGFCVGLGNVWRFPYLC). The Extracellular segment spans residues 63 to 67 (QSHGG). Residues 68–88 (GAFMIPFLILLVFEGIPLLYL) form a helical membrane-spanning segment. Residues 89–119 (EFAIGQRLRKGSMGVWSSIHPALKGIGIASM) lie on the Cytoplasmic side of the membrane. The helical transmembrane segment at 120 to 140 (FVSFMVGLYYNTIIAWVMWYF) threads the bilayer. Over 141-192 (FNSFQEPLPWSECPLNQNQTGYVEECAKSSSVDYFWYRETLNISTSISDSGS) the chain is Extracellular. 2 N-linked (GlcNAc...) asparagine glycosylation sites follow: Asn-158 and Asn-182. Residues 193 to 213 (IQWWILLCLTCAWSVLYVCII) traverse the membrane as a helical segment. The Cytoplasmic portion of the chain corresponds to 214-221 (RGIETTGK). Residues 222–242 (AVYITSTLPYVVLTIFLIRGL) form a helical membrane-spanning segment. Residues 243–268 (TLKGATNGIVFLFTPNITELSNPNTW) are Extracellular-facing. An N-linked (GlcNAc...) asparagine glycan is attached at Asn-258. A helical transmembrane segment spans residues 269–289 (LDAGAQVFYSFSLAFGGLISF). Topologically, residues 290–304 (SSYNSVHNNCEMDSV) are cytoplasmic. A helical transmembrane segment spans residues 305-325 (IVSVINGFTSVYAATVVYSII). Residues 326 to 413 (GFRATERFDD…TEAITKMPVS (88 aa)) lie on the Extracellular side of the membrane. N-linked (GlcNAc...) asparagine glycosylation is found at Asn-354 and Asn-368. Residues 414-434 (PLWSVLFFIMLFCLGLSSMFG) traverse the membrane as a helical segment. Residues 435 to 456 (NMEGVVVPLQDLNITPKKWPKE) are Cytoplasmic-facing. The helical transmembrane segment at 457–477 (LLTGLICLGTYLIAFIFTLNS) threads the bilayer. Topologically, residues 478–487 (GQYWLSLLDS) are extracellular. Residues 488 to 508 (FAGSIPLLIIAFCEMFAVVYV) form a helical membrane-spanning segment. The Cytoplasmic portion of the chain corresponds to 509–531 (YGVDRFNKDIEFMIGHKPNIFWQ). A helical transmembrane segment spans residues 532–552 (VTWRVVSPLIMLVIFLFFFVI). The Extracellular portion of the chain corresponds to 553–581 (EVNKTLMYSIWDPNYEEFPKSQKIPYPNW). N-linked (GlcNAc...) asparagine glycosylation is present at Asn-555. A helical transmembrane segment spans residues 582–602 (VYAVVVTVAGVPCLSIPCFAI). Topologically, residues 603–634 (YKFIRNCCQKSDDHHGLVNTLSTASVNGDLKN) are cytoplasmic. Residue Ser-627 is modified to Phosphoserine.

This sequence belongs to the sodium:neurotransmitter symporter (SNF) (TC 2.A.22) family. SLC6A19 subfamily. In terms of assembly, interacts in a tissue-specific manner with ACE2 in small intestine and with CLTRN in the kidney. Interacts with CLTRN; this interaction is required for trafficking of SLC6A19 to the plasma membrane and for its catalytic activation in kidneys. Interacts with ACE2; this interaction is required for trafficking of SLC6A19 to the plasma membrane and for its catalytic activation in intestine. Interacts with ANPEP; the interaction positively regulates its amino acid transporter activity. As to expression, predominantly expressed in kidney and small intestine (at protein level). Expressed in the intestinal brush border (at protein level). Expression not observed in other organs, such as lung, skeletal muscle, brain, liver and pancreas. In kidney, expression is localized in the renal cortex but not in the medulla. Substantial amounts of expression in the proximal tubules. The distal nephron segments and the glomeruli are consistently negative. In the small intestine, expression is exclusively localized in villus enterocytes. High resolution of the hybridization-positive villi reveals a gradient of expression with the highest levels in apical cells. Not detected in crypt cells or in any other cell types of the small intestine.

Its subcellular location is the cell membrane. The catalysed reaction is L-alanine(in) + Na(+)(in) = L-alanine(out) + Na(+)(out). It carries out the reaction L-cysteine(in) + Na(+)(in) = L-cysteine(out) + Na(+)(out). The enzyme catalyses L-glutamine(in) + Na(+)(in) = L-glutamine(out) + Na(+)(out). It catalyses the reaction glycine(in) + Na(+)(in) = glycine(out) + Na(+)(out). The catalysed reaction is L-isoleucine(in) + Na(+)(in) = L-isoleucine(out) + Na(+)(out). It carries out the reaction L-leucine(in) + Na(+)(in) = L-leucine(out) + Na(+)(out). The enzyme catalyses L-methionine(in) + Na(+)(in) = L-methionine(out) + Na(+)(out). It catalyses the reaction L-phenylalanine(in) + Na(+)(in) = L-phenylalanine(out) + Na(+)(out). The catalysed reaction is L-serine(in) + Na(+)(in) = L-serine(out) + Na(+)(out). It carries out the reaction L-tryptophan(in) + Na(+)(in) = L-tryptophan(out) + Na(+)(out). The enzyme catalyses L-tyrosine(in) + Na(+)(in) = L-tyrosine(out) + Na(+)(out). It catalyses the reaction L-valine(in) + Na(+)(in) = L-valine(out) + Na(+)(out). Transporter that mediates resorption of neutral amino acids across the apical membrane of renal and intestinal epithelial cells. This uptake is sodium-dependent and chloride-independent. Requires CLTRN in kidney or ACE2 in intestine for cell surface expression and amino acid transporter activity. This Mus musculus (Mouse) protein is Sodium-dependent neutral amino acid transporter B(0)AT1 (Slc6a19).